Reading from the N-terminus, the 498-residue chain is Glutamate--tRNA ligase (498 aa).

Residues 11–21 carry the 'HIGH' region motif; sequence PSPTGHLHIGN. Residues 260 to 264 carry the 'KMSKS' region motif; that stretch reads KLSKR. Lys263 contributes to the ATP binding site.

It belongs to the class-I aminoacyl-tRNA synthetase family. Glutamate--tRNA ligase type 1 subfamily. In terms of assembly, monomer.

Its subcellular location is the cytoplasm. It carries out the reaction tRNA(Glu) + L-glutamate + ATP = L-glutamyl-tRNA(Glu) + AMP + diphosphate. In terms of biological role, catalyzes the attachment of glutamate to tRNA(Glu) in a two-step reaction: glutamate is first activated by ATP to form Glu-AMP and then transferred to the acceptor end of tRNA(Glu). In Leuconostoc citreum (strain KM20), this protein is Glutamate--tRNA ligase.